A 541-amino-acid chain; its full sequence is Calcium-dependent protein kinase 9 (541 aa).

A disordered region spans residues 1–75; that stretch reads MGNCFAKNHG…PGLSPKTTTK (75 aa). Gly2 is lipidated: N-myristoyl glycine. Polar residues predominate over residues 14 to 54; the sequence is PQQNGNTTRSVEVGVTNQDPPSYTPQARTTQQPEKPGSVNS. Residue Ser69 is modified to Phosphoserine. One can recognise a Protein kinase domain in the interval 91-349; sequence YTLGKELGRG…AADVLQHPWL (259 aa). ATP contacts are provided by residues 97–105 and Lys120; that span reads LGRGQFGVT. Asp215 (proton acceptor) is an active-site residue. At Ser255 the chain carries Phosphoserine. Positions 355–385 are autoinhibitory domain; it reads ASDKPIDSAVLSRMKQFRAMNKLKKLALKVI. EF-hand domains are found at residues 392 to 427, 428 to 463, 464 to 499, and 500 to 534; these read EEIQGLKAMFANIDTDNSGTITYEELKEGLAKLGSK, LTEAEVKQLMDAADVDGNGSIDYIEFITATMHRHRL, ESNENLYKAFQHFDKDSSGYITIDELESALKEYGMG, and DDATIKEVLSDVDSDNDGRINYEEFCAMMRSGNPQ. 20 residues coordinate Ca(2+): Asp405, Asp407, Ser409, Thr411, Glu416, Asp441, Asp443, Asn445, Ser447, Glu452, Asp477, Asp479, Ser481, Tyr483, Glu488, Asp512, Asp514, Asp516, Arg518, and Glu523.

Belongs to the protein kinase superfamily. Ser/Thr protein kinase family. CDPK subfamily.

It is found in the cell membrane. It carries out the reaction L-seryl-[protein] + ATP = O-phospho-L-seryl-[protein] + ADP + H(+). The enzyme catalyses L-threonyl-[protein] + ATP = O-phospho-L-threonyl-[protein] + ADP + H(+). With respect to regulation, activated by calcium. Autophosphorylation may play an important role in the regulation of the kinase activity. In terms of biological role, may play a role in signal transduction pathways that involve calcium as a second messenger. In Arabidopsis thaliana (Mouse-ear cress), this protein is Calcium-dependent protein kinase 9 (CPK9).